Consider the following 712-residue polypeptide: uncharacterized protein (712 aa).

3 disordered regions span residues 1-46, 107-264, and 370-389; these read MAKI…NNLN, NIKP…IPQA, and QPQH…QQNQ. 3 stretches are compositionally biased toward low complexity: residues 10-46, 107-143, and 161-173; these read INNS…NNLN, NIKP…SNSS, and TFDN…NSSN. Residues 178 to 187 show a composition bias toward polar residues; it reads ISPTTSPQLE. 2 stretches are compositionally biased toward low complexity: residues 188–198 and 241–264; these read QHQQYQQQQHQ and PLQQ…IPQA.

This is an uncharacterized protein from Dictyostelium discoideum (Social amoeba).